The following is a 1414-amino-acid chain: Protein KATNIP homolog (1414 aa).

Disordered regions lie at residues 1–32, 80–116, 139–158, 712–731, 756–783, 823–861, and 924–943; these read MHGKSLGSSRKNDSRSKIRQEKESNIDFDEKH, QQSTQDLARESSKSSKIPDDGCSHLPGRRSQTAPGKI, GPNTKYSEDFESDDDMNEDQ, VSATSSKEPPPCPRDDNDLT, SSSSNFQQKSHNQPTKNHLNASSSTFTN, KMDNEDDLENFSNQSSYNSDRPVSGRRKTVQMQDKSEKY, and QQQKAGKQSDSTKNGSSLMP. Basic and acidic residues-rich tracts occupy residues 10–32 and 86–101; these read RKNDSRSKIRQEKESNIDFDEKH and LARESSKSSKIPDDGC. A compositionally biased stretch (acidic residues) spans 147–158; it reads DFESDDDMNEDQ. Composition is skewed to polar residues over residues 832–843 and 924–940; these read NFSNQSSYNSDR and QQQKAGKQSDSTKNGSS.

The protein resides in the cytoplasm. It is found in the cytoskeleton. The protein localises to the cilium axoneme. It localises to the cilium basal body. Functionally, may control cilium integrity. The protein is Protein KATNIP homolog of Xenopus laevis (African clawed frog).